A 577-amino-acid chain; its full sequence is Putative laccase-1 (577 aa).

The first 28 residues, 1–28, serve as a signal peptide directing secretion; that stretch reads MGTAKIPALLWFLLAGLVLALAVNPAHG. Plastocyanin-like domains follow at residues 37 to 153 and 163 to 316; these read FITE…PKRG and KEIP…YTDS. 2 N-linked (GlcNAc...) asparagine glycosylation sites follow: asparagine 42 and asparagine 83. Cu cation is bound by residues histidine 87 and histidine 89. An N-linked (GlcNAc...) asparagine glycan is attached at asparagine 115. Cu cation-binding residues include histidine 132 and histidine 134. Residues asparagine 276, asparagine 304, asparagine 382, and asparagine 402 are each glycosylated (N-linked (GlcNAc...) asparagine). Positions 442–561 constitute a Plastocyanin-like 3 domain; the sequence is DINGGGPLLT…DTMFIVKDGK (120 aa). 8 residues coordinate Cu cation: histidine 478, histidine 481, histidine 483, histidine 540, cysteine 541, histidine 542, histidine 546, and methionine 551.

Belongs to the multicopper oxidase family. Cu cation is required as a cofactor.

Its subcellular location is the secreted. It localises to the extracellular space. The protein localises to the apoplast. It carries out the reaction 4 hydroquinone + O2 = 4 benzosemiquinone + 2 H2O. Functionally, lignin degradation and detoxification of lignin-derived products. The polypeptide is Putative laccase-1 (LAC1) (Oryza sativa subsp. japonica (Rice)).